Consider the following 161-residue polypeptide: Non-specific lipid transfer protein GPI-anchored 24 (161 aa).

The first 23 residues, 1-23 (MAQTTTLILLLATLLVAATTVSG), serve as a signal peptide directing secretion. Cystine bridges form between Cys42–Cys79, Cys49–Cys63, Cys64–Cys104, and Cys77–Cys113. A glycan (N-linked (GlcNAc...) asparagine) is linked at Asn92. Residue Asp138 is the site of GPI-anchor amidated aspartate attachment. Positions 139-161 (AASKLAGTGLVGIVVITIAAMFY) are cleaved as a propeptide — removed in mature form.

The protein belongs to the plant LTP family.

It is found in the cell membrane. Functionally, probable lipid transfer protein. This chain is Non-specific lipid transfer protein GPI-anchored 24, found in Arabidopsis thaliana (Mouse-ear cress).